The primary structure comprises 456 residues: MARGNAPRDSYHLVGISFFILGLGTLLPWNFFITAIPYFQGRLAGTNSSAETMGTNHTSPTDTFNFNNWVTLLSQLPLLLFTLLNSFLYQCIPESVRILGSLLAILLLFALTAALVKVDLSPGLFFSVTMASVWFINSFCAVLQGSLFGQLGTMPSTYSTLFLSGQGLAGIFAALAMLMSLASGVDAQTSALGYFITPCVGILLSIVCYLSLPHLKFARYYLTEKLSQAPTQELETKAELLQADEKNGVPISPQQASPTLDLDPEKEPEPEEPQKPGKPSVFVVFRKIWLTALCLVLVFTVTLSVFPAITAMVTTSSNSPGKWGLFFNPICCFLLFNVMDWLGRSLTSYFLWPDEDSQQLLPLLVCLRFLFVPLFMLCHVPQHARLPIIFRQDAYFITFMLLFAVSNGYLVSLTMCLAPRQVLPHEREVAGALMTFFLALGLSCGASLSFLFKALL.

The helical transmembrane segment at 13–33 (LVGISFFILGLGTLLPWNFFI) threads the bilayer. N-linked (GlcNAc...) asparagine glycosylation occurs at Asn56. The next 5 membrane-spanning stretches (helical) occupy residues 69–89 (WVTLLSQLPLLLFTLLNSFLY), 98–118 (ILGSLLAILLLFALTAALVKV), 123–143 (GLFFSVTMASVWFINSFCAVL), 161–181 (LFLSGQGLAGIFAALAMLMSL), and 192–212 (LGYFITPCVGILLSIVCYLSL). The interval 248–277 (GVPISPQQASPTLDLDPEKEPEPEEPQKPG) is disordered. Ser252 carries the phosphoserine modification. Residues 263 to 275 (DPEKEPEPEEPQK) are compositionally biased toward basic and acidic residues. 5 helical membrane passes run 288–308 (IWLTALCLVLVFTVTLSVFPA), 323–343 (WGLFFNPICCFLLFNVMDWLG), 360–380 (LLPLLVCLRFLFVPLFMLCHV), 396–416 (FITFMLLFAVSNGYLVSLTMC), and 432–452 (ALMTFFLALGLSCGASLSFLF).

The protein belongs to the SLC29A/ENT transporter (TC 2.A.57) family.

Its subcellular location is the apical cell membrane. The protein resides in the basolateral cell membrane. It localises to the nucleus membrane. It carries out the reaction inosine(in) = inosine(out). It catalyses the reaction adenosine(in) = adenosine(out). The enzyme catalyses uridine(out) = uridine(in). The catalysed reaction is thymidine(in) = thymidine(out). It carries out the reaction hypoxanthine(out) = hypoxanthine(in). It catalyses the reaction adenine(out) = adenine(in). The enzyme catalyses cytidine(in) = cytidine(out). The catalysed reaction is thymine(out) = thymine(in). It carries out the reaction uracil(in) = uracil(out). It catalyses the reaction guanine(out) = guanine(in). The enzyme catalyses guanosine(in) = guanosine(out). Functionally, bidirectional uniporter involved in the facilitative transport of nucleosides and nucleobases, and contributes to maintaining their cellular homeostasis. Functions as a Na(+)-independent, passive transporter. Involved in the transport of nucleosides such as inosine, adenosine, uridine, thymidine, cytidine and guanosine. Also able to transport purine nucleobases (hypoxanthine, adenine, guanine) and pyrimidine nucleobases (thymine, uracil). Involved in nucleoside transport at basolateral membrane of kidney cells, allowing liver absorption of nucleoside metabolites. Mediates apical nucleoside uptake into Sertoli cells, thereby regulating the transport of nucleosides in testis across the blood-testis-barrier. Mediates both the influx and efflux of hypoxanthine in skeletal muscle microvascular endothelial cells to control the amount of intracellular hypoxanthine available for xanthine oxidase-mediated ROS production. This chain is Equilibrative nucleoside transporter 2, found in Mus musculus (Mouse).